A 304-amino-acid chain; its full sequence is Protein YIF1B (304 aa).

At 1-146 (MMEYPNQSGF…APRFDINAPD (146 aa)) the chain is on the cytoplasmic side. Positions 21-54 (MRGSAMEPSDPTQLFDDTSSGVNKHEPGRVGKSP) are disordered. Residues 30-42 (DPTQLFDDTSSGV) are compositionally biased toward polar residues. Residues 147–167 (LYIPVMGFITYVLVAGLALGT) form a helical membrane-spanning segment. The Extracellular segment spans residues 168–182 (QNRFSPEILGIQASS). A helical transmembrane segment spans residues 183-203 (ALVWLIIEVLAVLLSLYLVTV). The Cytoplasmic portion of the chain corresponds to 204 to 212 (NTDLTTIDL). The chain crosses the membrane as a helical span at residues 213-233 (VAFSGYKYVGMIVGVVAGLLF). The Extracellular portion of the chain corresponds to 234-236 (GRT). A helical membrane pass occupies residues 237 to 257 (GYYLALLWFCASIFVFTIRTL). The Cytoplasmic portion of the chain corresponds to 258 to 282 (RLKILSEAAAEGRLVRGTKNQLRMY). A helical membrane pass occupies residues 283-303 (LTMAIAAAQPVFMYWLTFHLV). A topological domain (extracellular) is located at residue Arg-304.

It belongs to the YIF1 family.

It is found in the endoplasmic reticulum membrane. The protein localises to the golgi apparatus membrane. The protein resides in the endoplasmic reticulum-Golgi intermediate compartment membrane. Its function is as follows. Functions in endoplasmic reticulum to Golgi vesicle-mediated transport and regulates the proper organization of the endoplasmic reticulum and the Golgi. Plays a key role in targeting to neuronal dendrites receptors such as HTR1A. Plays also a role in primary cilium and sperm flagellum assembly probably through protein transport to these compartments. The sequence is that of Protein YIF1B (yif1b) from Danio rerio (Zebrafish).